The following is a 407-amino-acid chain: Protein ZNF365 (407 aa).

At Ser-16 the chain carries Phosphoserine. The C2H2-type; degenerate zinc-finger motif lies at 26–51; that stretch reads LRCPRCGDHTRFRSLSSLRAHLEFSH. A Phosphoserine modification is found at Ser-138. Residues 169-297 are a coiled coil; sequence VEAVDRTIEK…QLEYYQSQQA (129 aa). At Thr-175 the chain carries Phosphothreonine. The disordered stretch occupies residues 347–392; the sequence is LKKAKDDRASMQPAKAIHEQAESSRDLCRPPKKGELLGFGRKGNIR. Basic and acidic residues predominate over residues 362 to 381; it reads AIHEQAESSRDLCRPPKKGE. Ser-369 is subject to Phosphoserine.

As to quaternary structure, homodimer. Interacts with NDE1 and NDEL1. Does not interact with TUBG1. Interacts with DISC1. Interacts with PARP1. Interacts with MCRS1. As to expression, isoform 1 is expressed in brain. Isoform 2 is expressed in placenta and at low level in lung and liver. Isoform 3 is expressed in kidney and pancreas. Isoform 1 is expressed exclusively in brain.

It localises to the cytoplasm. The protein resides in the cytoskeleton. It is found in the microtubule organizing center. The protein localises to the centrosome. Involved in the regulation of neurogenesis. Negatively regulates neurite outgrowth. Involved in the morphogenesis of basket cells in the somatosensory cortex during embryogenesis. Involved in the positive regulation of oligodendrocyte differentiation during postnatal growth. Involved in dendritic arborization, morphogenesis of spine density dendrite, and establishment of postsynaptic dendrite density in cortical pyramidal neurons. Involved in homologous recombination (HR) repair pathway. Required for proper resolution of DNA double-strand breaks (DSBs) by HR. Is required for recovery of stalled replication forks, and directly contributes to genomic stability. Interacts with PARP1 and mediates MRE11-dependent DNA end resection during replication fork recovery. Contributes to genomic stability by preventing telomere dysfunction. The protein is Protein ZNF365 (ZNF365) of Homo sapiens (Human).